A 209-amino-acid polypeptide reads, in one-letter code: PRA1 family protein B1 (209 aa).

N-acetylalanine is present on Ala2. Transmembrane regions (helical) follow at residues 73–93, 95–115, 133–153, 154–174, and 185–205; these read LAYF…FSLF, HPLS…LYLF, ETLL…SVGS, LLTS…AFVV, and PANA…AAAV.

Belongs to the PRA1 family. As to quaternary structure, can form homodimer. Interacts with PRA1B2, PRA1B3, PRA1B4, PRA1B5, PRA1B6 and PRA1E.

It is found in the endosome membrane. Functionally, may be involved in both secretory and endocytic intracellular trafficking in the endosomal/prevacuolar compartments. The protein is PRA1 family protein B1 (PRA1B1) of Arabidopsis thaliana (Mouse-ear cress).